Reading from the N-terminus, the 364-residue chain is Protein-glutamate methylesterase/protein-glutamine glutaminase (364 aa).

Positions 5-123 (RVLVVDDTIL…PAANKAALAN (119 aa)) constitute a Response regulatory domain. Residue Asp-56 is modified to 4-aspartylphosphate. A CheB-type methylesterase domain is found at 174–364 (EIVVIGISTG…QEIVHTVKLY (191 aa)). Active-site residues include Ser-181, His-208, and Asp-306.

Belongs to the CheB family. Phosphorylated by CheA. Phosphorylation of the N-terminal regulatory domain activates the methylesterase activity.

It localises to the cytoplasm. The catalysed reaction is [protein]-L-glutamate 5-O-methyl ester + H2O = L-glutamyl-[protein] + methanol + H(+). It catalyses the reaction L-glutaminyl-[protein] + H2O = L-glutamyl-[protein] + NH4(+). In terms of biological role, involved in chemotaxis. Part of a chemotaxis signal transduction system that modulates chemotaxis in response to various stimuli. Catalyzes the demethylation of specific methylglutamate residues introduced into the chemoreceptors (methyl-accepting chemotaxis proteins or MCP) by CheR. Also mediates the irreversible deamidation of specific glutamine residues to glutamic acid. This is Protein-glutamate methylesterase/protein-glutamine glutaminase from Desulfotalea psychrophila (strain LSv54 / DSM 12343).